The sequence spans 426 residues: Histidine--tRNA ligase (426 aa).

The protein belongs to the class-II aminoacyl-tRNA synthetase family.

It localises to the cytoplasm. It catalyses the reaction tRNA(His) + L-histidine + ATP = L-histidyl-tRNA(His) + AMP + diphosphate + H(+). This chain is Histidine--tRNA ligase, found in Saccharolobus islandicus (strain M.16.27) (Sulfolobus islandicus).